Consider the following 189-residue polypeptide: Protein GrpE (189 aa).

The tract at residues 1–37 is disordered; the sequence is MSDSSKEKKKKFADMVSRQKGDDQQSDNHKQTDDLNE. Positions 17–33 are enriched in basic and acidic residues; that stretch reads SRQKGDDQQSDNHKQTD.

This sequence belongs to the GrpE family. Homodimer.

Its subcellular location is the cytoplasm. Participates actively in the response to hyperosmotic and heat shock by preventing the aggregation of stress-denatured proteins, in association with DnaK and GrpE. It is the nucleotide exchange factor for DnaK and may function as a thermosensor. Unfolded proteins bind initially to DnaJ; upon interaction with the DnaJ-bound protein, DnaK hydrolyzes its bound ATP, resulting in the formation of a stable complex. GrpE releases ADP from DnaK; ATP binding to DnaK triggers the release of the substrate protein, thus completing the reaction cycle. Several rounds of ATP-dependent interactions between DnaJ, DnaK and GrpE are required for fully efficient folding. In Wolbachia pipientis wMel, this protein is Protein GrpE.